The following is a 342-amino-acid chain: Ribosomal RNA small subunit methyltransferase C (342 aa).

This sequence belongs to the methyltransferase superfamily. RsmC family. Monomer.

The protein resides in the cytoplasm. The enzyme catalyses guanosine(1207) in 16S rRNA + S-adenosyl-L-methionine = N(2)-methylguanosine(1207) in 16S rRNA + S-adenosyl-L-homocysteine + H(+). In terms of biological role, specifically methylates the guanine in position 1207 of 16S rRNA in the 30S particle. This Salmonella arizonae (strain ATCC BAA-731 / CDC346-86 / RSK2980) protein is Ribosomal RNA small subunit methyltransferase C.